The chain runs to 154 residues: Ecotin-like protein 2 (154 aa).

It belongs to the protease inhibitor I11 (ecotin) family.

In Trypanosoma brucei brucei (strain 927/4 GUTat10.1), this protein is Ecotin-like protein 2.